The following is a 782-amino-acid chain: Endonuclease MutS2 (782 aa).

336–343 (GPNTGGKT) is a binding site for ATP. One can recognise a Smr domain in the interval 707-782 (LDLRGYRYED…GFGVTVATLK (76 aa)).

This sequence belongs to the DNA mismatch repair MutS family. MutS2 subfamily. In terms of assembly, homodimer. Binds to stalled ribosomes, contacting rRNA.

Endonuclease that is involved in the suppression of homologous recombination and thus may have a key role in the control of bacterial genetic diversity. Its function is as follows. Acts as a ribosome collision sensor, splitting the ribosome into its 2 subunits. Detects stalled/collided 70S ribosomes which it binds and splits by an ATP-hydrolysis driven conformational change. Acts upstream of the ribosome quality control system (RQC), a ribosome-associated complex that mediates the extraction of incompletely synthesized nascent chains from stalled ribosomes and their subsequent degradation. Probably generates substrates for RQC. This chain is Endonuclease MutS2, found in Staphylococcus aureus (strain MSSA476).